A 685-amino-acid polypeptide reads, in one-letter code: MKSKKSKFITKDILKEAIIESFKKLNPKYMMKNPVMFVVEVGFFVTILLTIFPSIFGDKGHNLRVYNLIVTIILFITVLFANFAESVAEGRGKAQADALKKTRKDTIAKLIGKDGSIKTINANELKKGDVVLVENGDVIPNDGEVVDGVASVDESAITGESAPVMKEPGGDFASVTGGTKVVSDWLKVEITATPGESFLDKMINLVEGASRQKTPNEIALNTILVSLTLIFLIVLVALYPMATYTGVKIPMSTLIALLVCLIPTTIGGLLSAIGIAGMDRVTRFNVIAMSGKAVEACGDVDTMILDKTGTITYGNRLAADFITVGGADKQKLIDYSVMCSLKDDTPEGKSIVELGKQLGITIDTKKYESIEFEEFTAQTRMSGIKLENGTAVKKGAYDAIKKRVQELKGVIPKDLDEAVNKVAKLGGTPLVVCVDNKIYGVIYLKDTVKPGLVERFERLREIGIKTIMCTGDNPLTAATIAKEAGVDGFIAECKPEDKIEAIKKEQDEGKLVAMTGDGTNDAPALAQADVGLAMNSGTTAAKEAANMVDLDSDPTKVLEVVEIGKQLLITRGALTTFSIANDVAKYFAIIPAIFTIAIPKMQLMNIMHLSTPYSAILSALIFNAIIIPALIPIAMKGVKYRPMKSEALLLRNMIVFGFGGIIVPFVGIKIIDMIITPMVRILNLG.

4 helical membrane-spanning segments follow: residues methionine 36–phenylalanine 56, leucine 68–alanine 88, isoleucine 218–leucine 238, and isoleucine 255–isoleucine 275. The active-site 4-aspartylphosphate intermediate is aspartate 306. Residues aspartate 343, glutamate 347, phenylalanine 375–serine 382, and lysine 394 contribute to the ATP site. Residues aspartate 517 and aspartate 521 each contribute to the Mg(2+) site. 3 helical membrane-spanning segments follow: residues phenylalanine 587–methionine 607, alanine 615–methionine 635, and isoleucine 654–isoleucine 674.

The protein belongs to the cation transport ATPase (P-type) (TC 3.A.3) family. Type IA subfamily. The system is composed of three essential subunits: KdpA, KdpB and KdpC.

The protein localises to the cell membrane. The enzyme catalyses K(+)(out) + ATP + H2O = K(+)(in) + ADP + phosphate + H(+). In terms of biological role, part of the high-affinity ATP-driven potassium transport (or Kdp) system, which catalyzes the hydrolysis of ATP coupled with the electrogenic transport of potassium into the cytoplasm. This subunit is responsible for energy coupling to the transport system and for the release of the potassium ions to the cytoplasm. The polypeptide is Potassium-transporting ATPase ATP-binding subunit (Clostridium acetobutylicum (strain ATCC 824 / DSM 792 / JCM 1419 / IAM 19013 / LMG 5710 / NBRC 13948 / NRRL B-527 / VKM B-1787 / 2291 / W)).